The sequence spans 333 residues: Serine/threonine-protein phosphatase 4 catalytic subunit 1 (333 aa).

The interval Met1–Thr28 is disordered. The segment covering Asp7–Leu27 has biased composition (polar residues). Positions 79, 81, 107, and 139 each coordinate Mn(2+). The active-site Proton donor is the His140. His189 and His264 together coordinate Mn(2+). Position 333 is a leucine methyl ester (Leu333).

It belongs to the PPP phosphatase family. PP-4 (PP-X) subfamily. In terms of assembly, serine/threonine-protein phosphatase 4 (PP4) occurs in different assemblies of the catalytic and one or more regulatory subunits. The regulatory subunits are likely to be ppfr-1, ppfr-2, ppfr-4 and smk-1. Interacts with mei-1. Mn(2+) is required as a cofactor. In terms of processing, methylation at the C-terminal Leu-333 is critical for interactions with regulatory subunits.

The protein resides in the cytoplasm. It is found in the cytoskeleton. Its subcellular location is the microtubule organizing center. It localises to the centrosome. It carries out the reaction O-phospho-L-seryl-[protein] + H2O = L-seryl-[protein] + phosphate. The enzyme catalyses O-phospho-L-threonyl-[protein] + H2O = L-threonyl-[protein] + phosphate. Its function is as follows. Protein phosphatase which plays an essential role in meiosis and in early embryonic mitosis. During spermatocyte meiosis and the first embryonic mitosis, regulates centrosome maturation, and thus spindle formation, by recruiting some of the components of the pericentriolar material (PCM). During oocyte meiosis I, regulates meiotic chromosome dynamics including synapsis-independent chromosome pairing, restriction of synapsis to homologous chromosomes, programmed DNA double-strand break initiation and crossover formation resulting in chiasma formation. During oocyte meiosis II and probably together with regulatory subunit ppfr-1, may regulate microtubule severing by dephosphorylating and activating mei-1, a component of the katanin microtubule severing complex. The polypeptide is Serine/threonine-protein phosphatase 4 catalytic subunit 1 (Caenorhabditis elegans).